Here is a 1331-residue protein sequence, read N- to C-terminus: NPC1-like intracellular cholesterol transporter 1 (1331 aa).

Residues 1–20 (MAAAWLGWLLWALLLSAAQG) form the signal peptide. The Extracellular portion of the chain corresponds to 21–282 (ELYTPKHEAG…RPSFYMGRMP (262 aa)). Cystine bridges form between C32–C90, C38–C56, C77–C125, C91–C129, C113–C254, C116–C172, C189–C197, C243–C259, and C256–C263. Residues N53 and N85 are each glycosylated (N-linked (GlcNAc...) asparagine). A glycan (N-linked (GlcNAc...) asparagine) is linked at N138. Residue N244 is glycosylated (N-linked (GlcNAc...) asparagine). The chain crosses the membrane as a helical span at residues 283–303 (GWLALIIIFTAVFVLLSAVLV). The Cytoplasmic segment spans residues 304–352 (RLRVVSNRNKNKAEGPQEAPKLPHKHKLSPHTILGRFFQNWGTRVASWP). A helical transmembrane segment spans residues 353-373 (LTVLALSFIVVIALAAGLTFI). Over 374-632 (ELTTDPVELW…DEINRTTIQD (259 aa)) the chain is Extracellular. Residues N416, N431, N464, N479, N497, and N506 are each glycosylated (N-linked (GlcNAc...) asparagine). A disulfide bridge links C471 with C485. Cysteines 525 and 542 form a disulfide. Residues N606 and N626 are each glycosylated (N-linked (GlcNAc...) asparagine). Positions 632 to 797 (DLPVFAVSYI…MTAFVALLSL (166 aa)) constitute an SSD domain. The chain crosses the membrane as a helical span at residues 633 to 653 (LPVFAVSYIIVFLYISLALGS). The Cytoplasmic portion of the chain corresponds to 654–665 (YSRCSRVAVESK). Residues 666 to 686 (ATLGLGGVIVVLGAVLAAMGF) traverse the membrane as a helical segment. The Extracellular portion of the chain corresponds to 687–696 (YSYLGVPSSL). Residues 697–717 (VIIQVVPFLVLAVGADNIFIF) traverse the membrane as a helical segment. At 718–742 (VLEYQRLPRMPGEQREAHIGRTLGS) the chain is on the cytoplasmic side. Residues 743 to 763 (VAPSMLLCSLSEAICFFLGAL) traverse the membrane as a helical segment. Residues 764–776 (TPMPAVRTFALTS) lie on the Extracellular side of the membrane. Residues 777–797 (GLAIILDFLLQMTAFVALLSL) form a helical membrane-spanning segment. Residues 798–846 (DSKRQEASRPDVLCCFSTRKLPPPKEKEGLLLRFFRKIYAPFLLHRFIR) lie on the Cytoplasmic side of the membrane. The helical transmembrane segment at 847–867 (PVVMLLFLTLFGANLYLMCNI) threads the bilayer. At 868–1113 (NVGLDQELAL…QQYLTVLPEG (246 aa)) the chain is on the extracellular side. N-linked (GlcNAc...) asparagine glycans are attached at residues N909 and N917. Disulfide bonds link C920-C925, C967-C1025, and C981-C990. N-linked (GlcNAc...) asparagine glycosylation is found at N996, N1038, and N1076. The helical transmembrane segment at 1114–1134 (IFTLALCFVPTFVVCYLLLGL) threads the bilayer. Over 1135 to 1142 (DMCSGILN) the chain is Cytoplasmic. The helical transmembrane segment at 1143-1163 (LLSIIMILVDTIGLMAVWGIS) threads the bilayer. Residues 1164 to 1165 (YN) are Extracellular-facing. Residues 1166–1186 (AVSLINLVTAVGMSVEFVSHI) traverse the membrane as a helical segment. At 1187-1206 (TRSFAVSTKPTRLERAKDAT) the chain is on the cytoplasmic side. Residues 1207–1227 (VFMGSAVFAGVAMTNFPGILI) form a helical membrane-spanning segment. Residues 1228-1242 (LGFAQAQLIQIFFFR) are Extracellular-facing. The chain crosses the membrane as a helical span at residues 1243–1263 (LNLLITLLGLLHGLVFLPVVL). Residues 1264–1331 (SYLGPDVNQA…SSLPKSDQKF (68 aa)) are Cytoplasmic-facing.

This sequence belongs to the patched family. As to quaternary structure, interacts with RAB11A, MYO5B and RAB11FIP2. Interaction with RAB11A, MYO5B and RAB11FIP2 is required for proper transport to the plasma membrane upon cholesterol depletion. Interacts with NPC2. Interacts with LIMA1. Highly glycosylated. In terms of tissue distribution, small intestine showed the highest level of expression. Expression in other tissues including gall bladder, liver, testis and stomach is also observed. Along the duodenum-ileum axis, the levels vary in different segments of the intestine with peak expression in the proximal jejunum. Protein expression is confined to the enterocyte. Discrete localization to the epithelial layer bordering the luminal space along the crypt-villus axis. Protein expression in the enterocyte is observed closest to the luminal space. Expression in enterocytes from the proximal (jejunum) but not in the distal (ileum) region.

It localises to the apical cell membrane. The protein resides in the cell membrane. It carries out the reaction cholesterol(in) = cholesterol(out). The catalysed reaction is sitosterol(out) = sitosterol(in). Its function is as follows. Plays a major role in cholesterol homeostasis. Critical for the uptake of cholesterol across the plasma membrane of the intestinal enterocyte. Involved in plant sterol absorption, it transports sitosterol, although at lower rates than cholesterol. Is the direct molecular target of ezetimibe, a drug that inhibits cholesterol absorption and is approved for the treatment of hypercholesterolemia. May have a function in the transport of multiple lipids and their homeostasis, thereby influencing lipid metabolism regulation. May be involved in caveolin trafficking from the plasma membrane. Acts as a negative regulator of NPC2 and down-regulates its expression and secretion by inhibiting its maturation and accelerating its degradation. This Rattus norvegicus (Rat) protein is NPC1-like intracellular cholesterol transporter 1.